Consider the following 567-residue polypeptide: TGF-beta receptor type-2 (567 aa).

The N-terminal stretch at 1–23 (MGRGLLRGLWPLHIVLWTRIAST) is a signal peptide. Over 24–166 (IPPHVPKSVN…SPDLLLVIIQ (143 aa)) the chain is Extracellular. 6 disulfides stabilise this stretch: Cys51–Cys84, Cys54–Cys71, Cys61–Cys67, Cys77–Cys101, Cys121–Cys136, and Cys138–Cys143. 2 N-linked (GlcNAc...) asparagine glycosylation sites follow: Asn70 and Asn94. The helical transmembrane segment at 167-187 (VTGVSLLPPLGIAIAVIIIFY) threads the bilayer. At 188-567 (CYRVHRQQKL…PEDGSLNTTK (380 aa)) the chain is on the cytoplasmic side. One can recognise a Protein kinase domain in the interval 244-546 (IELDTLVGKG…RFSELEHPER (303 aa)). ATP contacts are provided by residues 250-258 (VGKGRFAEV) and Lys277. Asp379 acts as the Proton acceptor in catalysis. Ser409, Ser548, and Ser553 each carry phosphoserine. Residues 545-567 (ERLSGRSCSQEKIPEDGSLNTTK) are disordered.

It belongs to the protein kinase superfamily. TKL Ser/Thr protein kinase family. TGFB receptor subfamily. As to quaternary structure, homodimer. Heterohexamer; TGFB1, TGFB2 and TGFB3 homodimeric ligands assemble a functional receptor composed of two TGFBR1 and TGFBR2 heterodimers to form a ligand-receptor heterohexamer. The respective affinity of TGFRB1 and TGFRB2 for the ligands may modulate the kinetics of assembly of the receptor and may explain the different biological activities of TGFB1, TGFB2 and TGFB3. Component of a complex composed of TSC22D1 (via N-terminus), TGFBR1 and TGFBR2; the interaction between TSC22D1 and TGFBR1 is inhibited by SMAD7 and promoted by TGFB1. Interacts with DAXX. Interacts with DYNLT4. Interacts with ZFYVE9; ZFYVE9 recruits SMAD2 and SMAD3 to the TGF-beta receptor. Interacts with and is activated by SCUBE3; this interaction does not affect TGFB1-binding to TGFBR2. Interacts with VPS39; this interaction is independent of the receptor kinase activity and of the presence of TGF-beta. Interacts with CLU. The cofactor is Mg(2+). It depends on Mn(2+) as a cofactor. Phosphorylated on a Ser/Thr residue in the cytoplasmic domain. As to expression, widely expressed in adult. Expressed primarily in mesenchyme and epidermis of the midgestational fetus.

The protein resides in the cell membrane. It localises to the membrane raft. It catalyses the reaction L-threonyl-[receptor-protein] + ATP = O-phospho-L-threonyl-[receptor-protein] + ADP + H(+). The enzyme catalyses L-seryl-[receptor-protein] + ATP = O-phospho-L-seryl-[receptor-protein] + ADP + H(+). Functionally, transmembrane serine/threonine kinase forming with the TGF-beta type I serine/threonine kinase receptor, TGFBR1, the non-promiscuous receptor for the TGF-beta cytokines TGFB1, TGFB2 and TGFB3. Transduces the TGFB1, TGFB2 and TGFB3 signal from the cell surface to the cytoplasm and is thus regulating a plethora of physiological and pathological processes including cell cycle arrest in epithelial and hematopoietic cells, control of mesenchymal cell proliferation and differentiation, wound healing, extracellular matrix production, immunosuppression and carcinogenesis. The formation of the receptor complex composed of 2 TGFBR1 and 2 TGFBR2 molecules symmetrically bound to the cytokine dimer results in the phosphorylation and the activation of TGFRB1 by the constitutively active TGFBR2. Activated TGFBR1 phosphorylates SMAD2 which dissociates from the receptor and interacts with SMAD4. The SMAD2-SMAD4 complex is subsequently translocated to the nucleus where it modulates the transcription of the TGF-beta-regulated genes. This constitutes the canonical SMAD-dependent TGF-beta signaling cascade. Also involved in non-canonical, SMAD-independent TGF-beta signaling pathways. In terms of biological role, has transforming growth factor beta-activated receptor activity. In Mus musculus (Mouse), this protein is TGF-beta receptor type-2 (Tgfbr2).